The following is a 183-amino-acid chain: Shikimate kinase (183 aa).

Residue 25–30 (GAGKTT) participates in ATP binding. Position 29 (Thr-29) interacts with Mg(2+). Residues Asp-47, Arg-71, and Gly-93 each contribute to the substrate site. Arg-131 contributes to the ATP binding site. Position 150 (Arg-150) interacts with substrate.

It belongs to the shikimate kinase family. Monomer. Mg(2+) is required as a cofactor.

It localises to the cytoplasm. It carries out the reaction shikimate + ATP = 3-phosphoshikimate + ADP + H(+). Its pathway is metabolic intermediate biosynthesis; chorismate biosynthesis; chorismate from D-erythrose 4-phosphate and phosphoenolpyruvate: step 5/7. Its function is as follows. Catalyzes the specific phosphorylation of the 3-hydroxyl group of shikimic acid using ATP as a cosubstrate. The chain is Shikimate kinase from Dechloromonas aromatica (strain RCB).